Reading from the N-terminus, the 4830-residue chain is Siderophore peptide synthetase fer3 (4830 aa).

The interval 197-623 (LDQAEKFPDR…LGRMNAEQVK (427 aa)) is adenylation 1. Positions 751-833 (ANEDPVTQAL…DLIPLLSDTT (83 aa)) constitute a Carrier 1 domain. Position 788 is an O-(pantetheine 4'-phosphoryl)serine (S788). A condensation 1 region spans residues 879-1317 (QKIFPTTATQ…HSLMREPETT (439 aa)). The tract at residues 1358–1781 (FENKAATEPE…IGRRDDLVKL (424 aa)) is adenylation 2. One can recognise a Carrier 2 domain in the interval 1929 to 2005 (GEDGDLQCQV…MLIRGLATKT (77 aa)). S1966 carries the O-(pantetheine 4'-phosphoryl)serine modification. The interval 2048–2503 (IPCSTLQEGM…LLDQVVSLLT (456 aa)) is condensation 2. Residues 2573 to 2977 (AGTPETACIN…LGRRDEQEKI (405 aa)) form an adenylation 3 region. In terms of domain architecture, Carrier 3 spans 3122–3198 (RPLSSLEREI…DIAAELSDSK (77 aa)). O-(pantetheine 4'-phosphoryl)serine is present on S3159. A condensation 3 region spans residues 3232–3621 (KVLPCLPSQE…RDRDELRISA (390 aa)). In terms of domain architecture, Carrier 4 spans 3685 to 3760 (TAAEEQIRDL…GLSKLLDQRQ (76 aa)). S3720 carries the post-translational modification O-(pantetheine 4'-phosphoryl)serine. The segment at 3779–4199 (RYKATPLQAG…GVQIKAGASD (421 aa)) is condensation 4. Residues 4264 to 4340 (SLSTAEQDIV…RLTVATETRS (77 aa)) enclose the Carrier 5 domain. Residue S4301 is modified to O-(pantetheine 4'-phosphoryl)serine. The condensation 5 stretch occupies residues 4381 to 4708 (VLPLLTGQQQ…DLVSRAEHQQ (328 aa)).

Belongs to the NRP synthetase family.

Its pathway is siderophore biosynthesis. Nonribosomal peptide synthetase; part of the gene cluster that mediates the biosynthesis of siderophore ferrichrome A which is contributing to organismal virulence. The first step of ferrichrome A biosynthesis is performed by the HMG-CoA synthase hcs1 which catalyzes the generation of HMG-CoA and CoA using acetoacetyl-CoA and acetyl-CoA as substrates. The enoyl-CoA isomerase/hydratase fer4 then catalyzes the conversion of hcs1-produced HMG-CoA to methylglutaconyl-CoA. The acyltransferase fer5 then fuses the fer4-generated methylglutaconyl-CoA with sid1-generated hydroxyornithine to yield methylglutaconyl hydroxyornithine. Methylglutaconyl hydroxyornithine is then available for use by the NRPS fer3 to generate ferrichrome A. This Mycosarcoma maydis (Corn smut fungus) protein is Siderophore peptide synthetase fer3.